We begin with the raw amino-acid sequence, 111 residues long: Large ribosomal subunit protein uL22 (111 aa).

Belongs to the universal ribosomal protein uL22 family. As to quaternary structure, part of the 50S ribosomal subunit.

Functionally, this protein binds specifically to 23S rRNA; its binding is stimulated by other ribosomal proteins, e.g. L4, L17, and L20. It is important during the early stages of 50S assembly. It makes multiple contacts with different domains of the 23S rRNA in the assembled 50S subunit and ribosome. Its function is as follows. The globular domain of the protein is located near the polypeptide exit tunnel on the outside of the subunit, while an extended beta-hairpin is found that lines the wall of the exit tunnel in the center of the 70S ribosome. This Pelobacter propionicus (strain DSM 2379 / NBRC 103807 / OttBd1) protein is Large ribosomal subunit protein uL22.